A 448-amino-acid polypeptide reads, in one-letter code: tRNA modification GTPase MnmE (448 aa).

Positions 25, 83, and 122 each coordinate (6S)-5-formyl-5,6,7,8-tetrahydrofolate. One can recognise a TrmE-type G domain in the interval 218-372 (GFKVAIIGKP…LTQKLQKLLD (155 aa)). Asn228 is a binding site for K(+). Residues 228 to 233 (NTGKSS), 247 to 253 (SDIAGTT), and 272 to 275 (DTAG) each bind GTP. Ser232 contacts Mg(2+). 3 residues coordinate K(+): Ser247, Ile249, and Thr252. Position 253 (Thr253) interacts with Mg(2+). Residue Lys448 coordinates (6S)-5-formyl-5,6,7,8-tetrahydrofolate.

Belongs to the TRAFAC class TrmE-Era-EngA-EngB-Septin-like GTPase superfamily. TrmE GTPase family. As to quaternary structure, homodimer. Heterotetramer of two MnmE and two MnmG subunits. The cofactor is K(+).

It localises to the cytoplasm. Exhibits a very high intrinsic GTPase hydrolysis rate. Involved in the addition of a carboxymethylaminomethyl (cmnm) group at the wobble position (U34) of certain tRNAs, forming tRNA-cmnm(5)s(2)U34. The protein is tRNA modification GTPase MnmE of Nitratiruptor sp. (strain SB155-2).